Reading from the N-terminus, the 485-residue chain is Glutamyl-tRNA(Gln) amidotransferase subunit A (485 aa).

Catalysis depends on charge relay system residues lysine 79 and serine 154. The Acyl-ester intermediate role is filled by serine 178.

This sequence belongs to the amidase family. GatA subfamily. In terms of assembly, heterotrimer of A, B and C subunits.

The catalysed reaction is L-glutamyl-tRNA(Gln) + L-glutamine + ATP + H2O = L-glutaminyl-tRNA(Gln) + L-glutamate + ADP + phosphate + H(+). Allows the formation of correctly charged Gln-tRNA(Gln) through the transamidation of misacylated Glu-tRNA(Gln) in organisms which lack glutaminyl-tRNA synthetase. The reaction takes place in the presence of glutamine and ATP through an activated gamma-phospho-Glu-tRNA(Gln). This is Glutamyl-tRNA(Gln) amidotransferase subunit A from Staphylococcus haemolyticus (strain JCSC1435).